Here is a 259-residue protein sequence, read N- to C-terminus: MKRGLDMARSYNDHESSQETGPESPNSSTFNGMKALISSHSPKRSRRSVEKRVVNVPMKEMEGSRHKGDTTPPSDSWAWRKYGQKPIKGSPYPRGYYRCSSTKGCPARKQVERSRDDPTMILITYTSEHNHPWPLTSSTRNGPKPKPEPKPEPEPEVEPEAEEEDNKFMVLGRGIETTPSCVDEFAWFTEMETTSSTILESPIFSSEKKTAVSGADDVAVFFPMGEEDESLFADLGELPECSVVFRHRSSVVGSQVEIF.

Positions Met-1 to Ser-17 are enriched in basic and acidic residues. Disordered stretches follow at residues Met-1–Ser-101 and Thr-126–Asp-165. Residues Gln-18–Asn-31 show a composition bias toward polar residues. Basic and acidic residues predominate over residues Arg-47–Asp-69. Residues Gly-68–Pro-134 constitute a DNA-binding region (WRKY). Positions Glu-154 to Asp-165 are enriched in acidic residues.

It is found in the nucleus. Transcription factor. Interacts specifically with the W box (5'-(T)TGAC[CT]-3'), a frequently occurring elicitor-responsive cis-acting element. The polypeptide is Probable WRKY transcription factor 65 (WRKY65) (Arabidopsis thaliana (Mouse-ear cress)).